Here is a 156-residue protein sequence, read N- to C-terminus: MNLNATLIGQLIAFALFVAFCMKYVWPPLIKAIEERQANIANALSSAEKAKQEQADSKVLAEQEIIKAKEEAQKIIDLATKRRNEILESVQADAEVERQRIIEQGHAEIDSERKRVQEELRQKVAALAVAGAERIVGRSVDTAANNDIIDKLVAEL.

A helical membrane pass occupies residues 7–26; that stretch reads LIGQLIAFALFVAFCMKYVW.

This sequence belongs to the ATPase B chain family. As to quaternary structure, F-type ATPases have 2 components, F(1) - the catalytic core - and F(0) - the membrane proton channel. F(1) has five subunits: alpha(3), beta(3), gamma(1), delta(1), epsilon(1). F(0) has three main subunits: a(1), b(2) and c(10-14). The alpha and beta chains form an alternating ring which encloses part of the gamma chain. F(1) is attached to F(0) by a central stalk formed by the gamma and epsilon chains, while a peripheral stalk is formed by the delta and b chains.

The protein resides in the cell inner membrane. In terms of biological role, f(1)F(0) ATP synthase produces ATP from ADP in the presence of a proton or sodium gradient. F-type ATPases consist of two structural domains, F(1) containing the extramembraneous catalytic core and F(0) containing the membrane proton channel, linked together by a central stalk and a peripheral stalk. During catalysis, ATP synthesis in the catalytic domain of F(1) is coupled via a rotary mechanism of the central stalk subunits to proton translocation. Functionally, component of the F(0) channel, it forms part of the peripheral stalk, linking F(1) to F(0). The protein is ATP synthase subunit b of Haemophilus ducreyi (strain 35000HP / ATCC 700724).